Reading from the N-terminus, the 75-residue chain is Tautomerase PptA (75 aa).

Proline 2 (proton acceptor; via imino nitrogen) is an active-site residue.

It belongs to the 4-oxalocrotonate tautomerase family. PptA subfamily. In terms of assembly, homodimer.

The protein localises to the cytoplasm. This is Tautomerase PptA from Escherichia coli (strain SMS-3-5 / SECEC).